Here is a 216-residue protein sequence, read N- to C-terminus: ADP-ribosylation factor D (216 aa).

The segment covering 188 to 204 (SKFSFSNKSKQQKSNSQ) has biased composition (low complexity). Positions 188 to 216 (SKFSFSNKSKQQKSNSQPNTPRKNIQMMT) are disordered. Residues 205–216 (PNTPRKNIQMMT) show a composition bias toward polar residues.

This sequence belongs to the small GTPase superfamily. Arf family.

The protein resides in the golgi apparatus. GTP-binding protein involved in protein trafficking; may modulate vesicle budding and uncoating within the Golgi apparatus. The sequence is that of ADP-ribosylation factor D (arrD) from Dictyostelium discoideum (Social amoeba).